A 198-amino-acid polypeptide reads, in one-letter code: Autophagy-related protein 16 (198 aa).

Residues Glu24–Lys177 adopt a coiled-coil conformation.

It belongs to the ATG16 family. Homodimer. Part of the ATG5-ATG12/ATG16 complex. Several units of each may be present in this complex. Interacts directly with ATG12.

It localises to the preautophagosomal structure membrane. Functionally, stabilizes the ATG5-ATG12 conjugate. The ATG5-ATG12/ATG16 complex is required for efficient promotion of ATG8-conjugation to phosphatidylethanolamine and ATG8 localization to the pre-autophagosomal structure (PAS). Also recruits ATG3 to the PAS. Involved in endoplasmic reticulum-specific autophagic process and is essential for the survival of cells subjected to severe ER stress. Autophagy is required for proper vegetative growth, asexual/sexual reproduction, and full virulence. Autophagy is particularly involved in the biosynthesis of deoxynivalenol (DON), an important virulence determinant. The chain is Autophagy-related protein 16 from Gibberella zeae (strain ATCC MYA-4620 / CBS 123657 / FGSC 9075 / NRRL 31084 / PH-1) (Wheat head blight fungus).